The chain runs to 307 residues: Myeloid-associated differentiation marker-like protein 2 (307 aa).

2 consecutive MARVEL domains span residues 17–154 and 159–303; these read AVTS…ARPG and YMAT…RIRF. 7 helical membrane passes run 53 to 73, 90 to 110, 129 to 149, 163 to 183, 198 to 218, 229 to 249, and 278 to 298; these read FCMA…ACEF, AFAM…PLYF, LAAS…VALT, VSGL…GALV, VAVY…SVMG, RLVV…AVIW, and LVVA…LAYS.

It belongs to the MAL family.

It localises to the membrane. In Homo sapiens (Human), this protein is Myeloid-associated differentiation marker-like protein 2 (MYADML2).